The sequence spans 185 residues: Peptidyl-tRNA hydrolase (185 aa).

Residue Tyr14 participates in tRNA binding. His19 functions as the Proton acceptor in the catalytic mechanism. Tyr65, Asn67, and Asn113 together coordinate tRNA.

This sequence belongs to the PTH family. In terms of assembly, monomer.

It is found in the cytoplasm. It catalyses the reaction an N-acyl-L-alpha-aminoacyl-tRNA + H2O = an N-acyl-L-amino acid + a tRNA + H(+). Functionally, hydrolyzes ribosome-free peptidyl-tRNAs (with 1 or more amino acids incorporated), which drop off the ribosome during protein synthesis, or as a result of ribosome stalling. Its function is as follows. Catalyzes the release of premature peptidyl moieties from peptidyl-tRNA molecules trapped in stalled 50S ribosomal subunits, and thus maintains levels of free tRNAs and 50S ribosomes. This Rickettsia rickettsii (strain Iowa) protein is Peptidyl-tRNA hydrolase.